Consider the following 479-residue polypeptide: Pup--protein ligase (479 aa).

Glu17 contributes to the Mg(2+) binding site. An ATP-binding site is contributed by Arg62. Tyr64 contacts Mg(2+). Asp66 functions as the Proton acceptor in the catalytic mechanism. Glu72 lines the Mg(2+) pocket. The ATP site is built by Ser75 and Trp432.

The protein belongs to the Pup ligase/Pup deamidase family. Pup-conjugating enzyme subfamily.

It carries out the reaction ATP + [prokaryotic ubiquitin-like protein]-L-glutamate + [protein]-L-lysine = ADP + phosphate + N(6)-([prokaryotic ubiquitin-like protein]-gamma-L-glutamyl)-[protein]-L-lysine.. It participates in protein degradation; proteasomal Pup-dependent pathway. It functions in the pathway protein modification; protein pupylation. Catalyzes the covalent attachment of the prokaryotic ubiquitin-like protein modifier Pup to the proteasomal substrate proteins, thereby targeting them for proteasomal degradation. This tagging system is termed pupylation. The ligation reaction involves the side-chain carboxylate of the C-terminal glutamate of Pup and the side-chain amino group of a substrate lysine. This Corynebacterium diphtheriae (strain ATCC 700971 / NCTC 13129 / Biotype gravis) protein is Pup--protein ligase.